Consider the following 95-residue polypeptide: Acylphosphatase (95 aa).

The Acylphosphatase-like domain maps to 5-93; the sequence is RAHLFIRGKV…GEFQDFRILP (89 aa). Catalysis depends on residues Arg-20 and Asn-38.

This sequence belongs to the acylphosphatase family.

The enzyme catalyses an acyl phosphate + H2O = a carboxylate + phosphate + H(+). In Pyrobaculum arsenaticum (strain DSM 13514 / JCM 11321 / PZ6), this protein is Acylphosphatase (acyP).